The following is a 147-amino-acid chain: Hemoglobin subunit beta (147 aa).

Val-2 is subject to N-acetylvaline. The Globin domain maps to 3-147; the sequence is HLSGDEKNAV…VANALAHRYH (145 aa). Ser-45 is subject to Phosphoserine. At Lys-60 the chain carries N6-acetyllysine. His-64 contributes to the heme b binding site. N6-acetyllysine is present on Lys-83. His-93 is a heme b binding site. Cys-94 carries the S-nitrosocysteine modification.

The protein belongs to the globin family. In terms of assembly, heterotetramer of two alpha chains and two beta chains. As to expression, red blood cells.

Involved in oxygen transport from the lung to the various peripheral tissues. In Camelus dromedarius (Dromedary), this protein is Hemoglobin subunit beta (HBB).